A 263-amino-acid polypeptide reads, in one-letter code: Putative hydro-lyase Psyc_1103 (263 aa).

The protein belongs to the D-glutamate cyclase family.

This is Putative hydro-lyase Psyc_1103 from Psychrobacter arcticus (strain DSM 17307 / VKM B-2377 / 273-4).